Reading from the N-terminus, the 358-residue chain is 5,10-methenyltetrahydromethanopterin hydrogenase (358 aa).

The protein belongs to the HMD family. In terms of assembly, homotetramer.

The catalysed reaction is 5,10-methenyl-5,6,7,8-tetrahydromethanopterin + H2 = 5,10-methylenetetrahydromethanopterin + H(+). It participates in one-carbon metabolism; methanogenesis from CO(2); 5,10-methylene-5,6,7,8-tetrahydromethanopterin from 5,10-methenyl-5,6,7,8-tetrahydromethanopterin (hydrogen route): step 1/1. Its activity is regulated as follows. Activity requires salt; 100 mM potassium phosphate, potassium chloride, and sodium chloride are equally effective. Its function is as follows. Catalyzes the reversible reduction of methenyl-H(4)MPT(+) to methylene-H(4)MPT. The chain is 5,10-methenyltetrahydromethanopterin hydrogenase from Methanopyrus kandleri (strain AV19 / DSM 6324 / JCM 9639 / NBRC 100938).